The chain runs to 666 residues: Probable potassium transport system protein Kup (666 aa).

Transmembrane regions (helical) follow at residues 16–36 (GFII…LYTM), 58–78 (ISLI…LIAL), 100–120 (PWLI…GALT), 141–161 (IYQN…VLFG), 165–185 (FGTG…FSFL), 221–241 (IFIL…YSDL), 253–273 (WPFV…WILA), 294–314 (VYLV…LISG), 343–363 (LYIP…VLYF), 373–393 (YGLA…YYLI), 399–419 (PFLA…FFWA), and 424–444 (FMHG…VMFI).

It belongs to the HAK/KUP transporter (TC 2.A.72) family.

It is found in the cell membrane. The catalysed reaction is K(+)(in) + H(+)(in) = K(+)(out) + H(+)(out). In terms of biological role, transport of potassium into the cell. Likely operates as a K(+):H(+) symporter. This Streptococcus pyogenes serotype M6 (strain ATCC BAA-946 / MGAS10394) protein is Probable potassium transport system protein Kup.